A 99-amino-acid chain; its full sequence is Aspartyl/glutamyl-tRNA(Asn/Gln) amidotransferase subunit C (99 aa).

The protein belongs to the GatC family. In terms of assembly, heterotrimer of A, B and C subunits.

It catalyses the reaction L-glutamyl-tRNA(Gln) + L-glutamine + ATP + H2O = L-glutaminyl-tRNA(Gln) + L-glutamate + ADP + phosphate + H(+). It carries out the reaction L-aspartyl-tRNA(Asn) + L-glutamine + ATP + H2O = L-asparaginyl-tRNA(Asn) + L-glutamate + ADP + phosphate + 2 H(+). Its function is as follows. Allows the formation of correctly charged Asn-tRNA(Asn) or Gln-tRNA(Gln) through the transamidation of misacylated Asp-tRNA(Asn) or Glu-tRNA(Gln) in organisms which lack either or both of asparaginyl-tRNA or glutaminyl-tRNA synthetases. The reaction takes place in the presence of glutamine and ATP through an activated phospho-Asp-tRNA(Asn) or phospho-Glu-tRNA(Gln). This is Aspartyl/glutamyl-tRNA(Asn/Gln) amidotransferase subunit C from Corynebacterium efficiens (strain DSM 44549 / YS-314 / AJ 12310 / JCM 11189 / NBRC 100395).